Here is a 385-residue protein sequence, read N- to C-terminus: Probable di-N-acetylchitobiase 2 (385 aa).

An N-terminal signal peptide occupies residues 1–15; it reads MRIILLLFLIVFVVA. Residues 16–377 enclose the GH18 domain; the sequence is QSSSSSSSSG…DALASFFPQS (362 aa). N-linked (GlcNAc...) asparagine glycans are attached at residues N51 and N101. The Proton donor role is filled by E129. N223, N272, and N296 each carry an N-linked (GlcNAc...) asparagine glycan.

This sequence belongs to the glycosyl hydrolase 18 family.

It is found in the lysosome. In terms of biological role, involved in the degradation of asparagine-linked glycoproteins. May hydrolyze of N-acetyl-beta-D-glucosamine (1-4)N-acetylglucosamine chitobiose core from the reducing end of the bond. The chain is Probable di-N-acetylchitobiase 2 (ctbs2) from Dictyostelium discoideum (Social amoeba).